We begin with the raw amino-acid sequence, 97 residues long: Co-chaperonin GroES (97 aa).

This sequence belongs to the GroES chaperonin family. In terms of assembly, heptamer of 7 subunits arranged in a ring. Interacts with the chaperonin GroEL.

The protein localises to the cytoplasm. Together with the chaperonin GroEL, plays an essential role in assisting protein folding. The GroEL-GroES system forms a nano-cage that allows encapsulation of the non-native substrate proteins and provides a physical environment optimized to promote and accelerate protein folding. GroES binds to the apical surface of the GroEL ring, thereby capping the opening of the GroEL channel. This Yersinia pseudotuberculosis serotype O:1b (strain IP 31758) protein is Co-chaperonin GroES.